A 144-amino-acid polypeptide reads, in one-letter code: Signal recognition particle 19 kDa protein (144 aa).

A disordered region spans residues 117–144 (TRTQKTGGGDQSLQQGEGSKKGKGKKKK).

The protein belongs to the SRP19 family. In terms of assembly, component of a signal recognition particle complex that consists of a 7SL RNA molecule of 300 nucleotides and six protein subunits: SRP72, SRP68, SRP54, SRP19, SRP14 and SRP9. Interacts with IPO5, IPO7, IPO8, KPNB1 and TNPO1. Interactions with IPO8 and TNPO1 may be involved in SRP19 import into the nucleus.

Its subcellular location is the cytoplasm. The protein localises to the nucleus. It is found in the nucleolus. The protein resides in the nucleoplasm. Component of the signal recognition particle (SRP) complex, a ribonucleoprotein complex that mediates the cotranslational targeting of secretory and membrane proteins to the endoplasmic reticulum (ER). Binds directly to 7SL RNA. Mediates binding of SRP54 to the SRP complex. This is Signal recognition particle 19 kDa protein from Canis lupus familiaris (Dog).